An 876-amino-acid polypeptide reads, in one-letter code: Extended synaptotagmin-2-B (876 aa).

The interval 1 to 21 is disordered; it reads MASESGAEKGPPTTPAENGQP. At 1 to 35 the chain is on the cytoplasmic side; that stretch reads MASESGAEKGPPTTPAENGQPGVPIAAAVAADEQG. Residues 36-56 traverse the membrane as a helical segment; the sequence is MISVDIAGLFYQFSKTFILIF. Over 57-59 the chain is Lumenal; sequence PVY. A helical membrane pass occupies residues 60–80; it reads VLGYFGLSFSWLLIALVLLLW. Over 81–876 the chain is Cytoplasmic; that stretch reads WRRNKGNKNS…EDGTRAAASS (796 aa). One can recognise an SMP-LTD domain in the interval 123 to 302; the sequence is DIERAEWLNK…LPNRITVPLV (180 aa). 2 C2 domains span residues 301 to 421 and 446 to 592; these read LVSD…DEWF and NLDQ…HLNN. Ca(2+) contacts are provided by K332, D333, D345, D392, E393, D394, D396, D398, and D399. Residues 614 to 714 are disordered; sequence VRSPDEQHTS…KEPTPSIASD (101 aa). Residues 636–656 are compositionally biased toward pro residues; that stretch reads PPTPQMPAPSPAVAHKPPPTP. A compositionally biased stretch (low complexity) spans 686–698; sequence SSSSLSGSSFTYS. The C2 3 domain maps to 741 to 863; it reads PLGQIQLTIR…DAAKGWTQWF (123 aa). A required for phosphatidylinositol 4,5-bisphosphate-dependent location at the cell membrane region spans residues 788–795; that stretch reads KRRSGRRK.

This sequence belongs to the extended synaptotagmin family. Interacts with fgfr1 that has been activated by fgf1 binding. Interacts (via C2 domains) with the AP-2 complex (via an alpha subunit). Identified in a complex with the AP-2 complex and fgfr1.

The protein localises to the cell membrane. The protein resides in the endoplasmic reticulum membrane. In terms of biological role, tethers the endoplasmic reticulum to the cell membrane and promotes the formation of appositions between the endoplasmic reticulum and the cell membrane. Binds glycerophospholipids in a barrel-like domain and may play a role in cellular lipid transport. Plays a role in the rapid internalization of fgfr1 that has been activated by fgf1 binding; this occurs most likely via the AP-2 complex. Required for normal fgf signaling and the activation of downstream signaling cascades via its role in the internalization of activated fgfr1. Required for normal embryonic development via its role in fgf signaling and the downstream regulation of t/xBRA expression. The sequence is that of Extended synaptotagmin-2-B (esyt2-b) from Xenopus laevis (African clawed frog).